Consider the following 86-residue polypeptide: uncharacterized protein (86 aa).

Its subcellular location is the mitochondrion. This is an uncharacterized protein from Marchantia polymorpha (Common liverwort).